A 1003-amino-acid chain; its full sequence is MSAFNLERFRFDKGKKIDTEFGEKGASSRPSTPNSQLEDHVTSIPETPEAKRVNNPSLFKKDKGVSFLDSDSENEDHQSKSKFSSTHQQSHPREENGTSDSVTDDSEDDYLAVKRPSASTAQVKDGSKYKNLQRLKEIFPKQNNDELLKLIESTSTLDGAVAAGVVLFNKEGSSRKRKLDEVPKDSSPVHEGINGQTKKKKKIDRVSSDNDSSLSEDDWEKQEASVKKLQRHFPDLDKEELREVLQEHDWSFHEALEALKLFAEDETDALQNAAKKEVSNGKEFSRSNKNDNKSSAKAKANQNSNKAMAQNGVKKKGKGKKYSENAKRDTRDLESEESASDAGSCLDEDYSSGDEKLEEEYKTKILSFLQDASLDELYLIPHCSHKKAQKITELRPFSSWESLFEKMTKSNGLSEDLIWDCQTLIKEREVVMKLMNKCEEISRTLTKQVTQLTEDGECGWNIEQPSIMSENLVLKPYQKIGLNWLALLHKHKVNMILADEMGLGKTVQAIAFLAHLYVTGDSGPHLVVVPASTMDNWIREFNQWCPSMNILLYYGSQEERKHLRYDILNKVVEFNVIVTTYNCAISSAEDRSLFRRLKLNFAVFDEGHMLKNMSAIRYQHLMTLNARSRLLLTGTPVQNNLLELMSLLNFVMPHMFSSSTSEIKRLFSSKAKSTDEQTIFEKERIAHAKQIMKPFILRRVKSEVLKQLPPKQDKIKFCQMSKKQEQLYSDLLNKLKKSIDATEKNSELCNVMMHLRKMANHPLLHRQYYTADRLRTMSKLMLKEPTHCDANPDLIFEDMEVMTDFELHRLCNEFTTLSQYKLEKELILDSGKFNILEKLLSDIKKKGDRVVLFSQFTMMLDIIEVFLRHHQHRYVRLDGKTQISERIHLIDEFNTDMDIFIFLLSTKAGGLGINLTSANIVILHDIDCNPYNDKQAEDRCHRVGQTKEVKVIKLIGKGTIEESMLKISQQKLRLEQDMTTNDTGDEGTIPLDMATLLKTSLGL.

3 disordered regions span residues 15–130, 172–235, and 274–351; these read KKID…SKYK, GSSR…HFPD, and AKKE…EDYS. Composition is skewed to basic and acidic residues over residues 172–188, 221–235, and 274–294; these read GSSR…DSSP, KQEA…HFPD, and AKKE…DNKS. Residues 221–264 enclose the CUE domain; the sequence is KQEASVKKLQRHFPDLDKEELREVLQEHDWSFHEALEALKLFAE. Residues 295–311 show a composition bias toward low complexity; it reads SAKAKANQNSNKAMAQN. Basic and acidic residues predominate over residues 321–333; sequence KYSENAKRDTRDL. The Helicase ATP-binding domain occupies 486 to 654; the sequence is ALLHKHKVNM…MSLLNFVMPH (169 aa). 499–506 contacts ATP; the sequence is DEMGLGKT. The short motif at 605–608 is the DEGH box element; it reads DEGH. Positions 835–997 constitute a Helicase C-terminal domain; it reads ILEKLLSDIK…TIPLDMATLL (163 aa).

The protein belongs to the SNF2/RAD54 helicase family.

It is found in the nucleus. The protein localises to the chromosome. The enzyme catalyses ATP + H2O = ADP + phosphate + H(+). Its function is as follows. DNA helicase that possesses intrinsic ATP-dependent nucleosome-remodeling activity and is both required for DNA repair and heterochromatin organization. Promotes DNA end resection of double-strand breaks (DSBs) following DNA damage: probably acts by weakening histone DNA interactions in nucleosomes flanking DSBs. Required for the restoration of heterochromatin organization after replication. This Xenopus tropicalis (Western clawed frog) protein is SWI/SNF-related matrix-associated actin-dependent regulator of chromatin subfamily A containing DEAD/H box 1 (smarcad1).